Here is a 206-residue protein sequence, read N- to C-terminus: Large ribosomal subunit protein uL4 (206 aa).

The disordered stretch occupies residues T48–N78.

Belongs to the universal ribosomal protein uL4 family. As to quaternary structure, part of the 50S ribosomal subunit.

Its function is as follows. One of the primary rRNA binding proteins, this protein initially binds near the 5'-end of the 23S rRNA. It is important during the early stages of 50S assembly. It makes multiple contacts with different domains of the 23S rRNA in the assembled 50S subunit and ribosome. Functionally, forms part of the polypeptide exit tunnel. In Lawsonia intracellularis (strain PHE/MN1-00), this protein is Large ribosomal subunit protein uL4.